The chain runs to 133 residues: uncharacterized protein (133 aa).

This sequence belongs to the ycf68 family.

It localises to the plastid. Its subcellular location is the chloroplast. This is an uncharacterized protein from Oryza sativa subsp. japonica (Rice).